We begin with the raw amino-acid sequence, 265 residues long: MPVVSLAQMMESGVHFGHQTRRWNPKMSPYIYTSRNGVHIIDLVQTAHLMDEAYNYMRSQAEQGKKFLFVGTKRQAAGIIAQEAARCGSHYINQRWLGGMLTNWATIKTRVDRLKDLERREESGALDLLPKKEASMLRRELAKLQKYLGGIKTMRKVPDVVVIVDQRREYNAVQECQKLSIPIVSMLDTNCDPDVVDIPIPANDDAIRSIKLIVGKLADAIYEGRHGQLDVEEEYEDYEGAEDDYEYDETEYTDSVIPDDEEEAE.

The tract at residues 231–265 (VEEEYEDYEGAEDDYEYDETEYTDSVIPDDEEEAE) is disordered.

Belongs to the universal ribosomal protein uS2 family.

In Trichormus variabilis (strain ATCC 29413 / PCC 7937) (Anabaena variabilis), this protein is Small ribosomal subunit protein uS2.